A 74-amino-acid chain; its full sequence is UPF0346 protein BPUM_1890 (74 aa).

This sequence belongs to the UPF0346 family.

The protein is UPF0346 protein BPUM_1890 of Bacillus pumilus (strain SAFR-032).